A 285-amino-acid chain; its full sequence is CBY1-interacting BAR domain-containing protein 1-B (285 aa).

A mitochondrion-targeting transit peptide spans 1-48; that stretch reads MSQTPEARTRDNQTRQIQESVNNVEKHFGELCQIFAGYVRKTARLRDK. A BAR-like region spans residues 11–221; it reads DNQTRQIQES…DIDEEEDLEV (211 aa). Residues 142 to 184 adopt a coiled-coil conformation; it reads RQIISQAETELQRATMDAARISQQLEETIDNFEKQKIKDIKKL. The segment covering 241–261 has biased composition (polar residues); it reads NSRSGSTSRAPSVISQPPGNR. Residues 241 to 285 form a disordered region; it reads NSRSGSTSRAPSVISQPPGNRQKNRMEDDEDGEDDNDENSTEDEN. The span at 267 to 285 shows a compositional bias: acidic residues; that stretch reads EDDEDGEDDNDENSTEDEN.

It belongs to the CIBAR family.

The protein localises to the cytoplasm. Its subcellular location is the cytoskeleton. The protein resides in the microtubule organizing center. It is found in the centrosome. It localises to the centriole. The protein localises to the cell projection. Its subcellular location is the cilium. The protein resides in the nucleus. It is found in the mitochondrion inner membrane. It localises to the flagellum. Functionally, plays a critical role in regulating mitochondrial ultrastructure and function by maintaining the integrity of mitochondrial morphology, particularly the organization of cristae. Plays a crucial role in ciliogenesis. Plays a key role in the correct positioning of the annulus, a septin-based ring structure in the sperm flagellum, serving both as a physical barrier and a membrane diffusion barrier that separates the midpiece (MP) from the principal piece (PP). The polypeptide is CBY1-interacting BAR domain-containing protein 1-B (Xenopus laevis (African clawed frog)).